The following is a 110-amino-acid chain: MIKLRLKRFGKKRETSFRLVACNSTSRRDGRPLQELGFYNPRTKETRLDTEALRTRLGQGAQPTDAVRTLLEKGGLLEKKVRPAEVLGKQKQEKERSAKKKDATASETSE.

Residues 81-104 are compositionally biased toward basic and acidic residues; that stretch reads VRPAEVLGKQKQEKERSAKKKDAT. Positions 81 to 110 are disordered; that stretch reads VRPAEVLGKQKQEKERSAKKKDATASETSE.

Belongs to the bacterial ribosomal protein bS16 family.

This Prochlorococcus marinus (strain NATL1A) protein is Small ribosomal subunit protein bS16.